We begin with the raw amino-acid sequence, 635 residues long: Bifunctional lysine-specific demethylase and histidyl-hydroxylase NO66 (635 aa).

Disordered stretches follow at residues 1-115 (MSAV…LQNS) and 141-190 (FNGE…KANG). Residues 84–99 (ASASDINTSASKNVNA) are compositionally biased toward low complexity. A compositionally biased stretch (polar residues) spans 141–156 (FNGESLKNNSNHSTPV). Residues 295–440 (CSIRMLNPQT…DLLELFFPHA (146 aa)) form the JmjC domain. Residues His341, Asp343, and His406 each coordinate Fe cation.

It belongs to the ROX family. NO66 subfamily. Requires Fe(2+) as cofactor.

It is found in the nucleus. It carries out the reaction N(6),N(6)-dimethyl-L-lysyl(36)-[histone H3] + 2 2-oxoglutarate + 2 O2 = L-lysyl(36)-[histone H3] + 2 formaldehyde + 2 succinate + 2 CO2. Functionally, oxygenase that can act as both a histone lysine demethylase and a ribosomal histidine hydroxylase. Specifically demethylates 'Lys-4' (H3K4me) and 'Lys-36' (H3K36me) of histone H3, thereby playing a central role in histone code. The chain is Bifunctional lysine-specific demethylase and histidyl-hydroxylase NO66 from Aedes aegypti (Yellowfever mosquito).